A 492-amino-acid polypeptide reads, in one-letter code: WD repeat-containing protein JIP5 (492 aa).

5 WD repeats span residues 127-166 (RHKG…VVKK), 178-217 (KKND…LSNS), 236-274 (RSAY…ILIS), 276-317 (DQED…LEDQ), and 365-405 (RNHS…VEEN). Composition is skewed to acidic residues over residues 404 to 414 (ENASVESDSDE) and 422 to 433 (DLSDDTSSDDET). The interval 404–472 (ENASVESDSD…SKSVKKRKIM (69 aa)) is disordered. Positions 449 to 462 (KDLKEDHQEEKESN) are enriched in basic and acidic residues.

Interacts with BUD27 and GIS1.

It localises to the nucleus. It is found in the nucleolus. In Saccharomyces cerevisiae (strain ATCC 204508 / S288c) (Baker's yeast), this protein is WD repeat-containing protein JIP5 (JIP5).